The sequence spans 499 residues: Cytochrome P450 monooxygenase notH' (499 aa).

A helical transmembrane segment spans residues 11 to 31 (LGLEPAGWALALLTSSIIYLF). N296 and N427 each carry an N-linked (GlcNAc...) asparagine glycan. C440 contacts heme.

It belongs to the cytochrome P450 family. It depends on heme as a cofactor.

The protein resides in the membrane. Its pathway is alkaloid biosynthesis. In terms of biological role, cytochrome P450 monooxygenase; part of the gene cluster that mediates the biosynthesis of notoamide, a fungal indole alkaloid that belongs to a family of natural products containing a characteristic bicyclo[2.2.2]diazaoctane core. The first step of notoamide biosynthesis involves coupling of L-proline and L-tryptophan by the bimodular NRPS notE', to produce cyclo-L-tryptophan-L-proline called brevianamide F. The reverse prenyltransferase notF' then acts as a deoxybrevianamide E synthase and converts brevianamide F to deoxybrevianamide E via reverse prenylation at C-2 of the indole ring leading to the bicyclo[2.2.2]diazaoctane core. Deoxybrevianamide E is further hydroxylated at C-6 of the indole ring, likely catalyzed by the cytochrome P450 monooxygenase notG', to yield 6-hydroxy-deoxybrevianamide E. 6-hydroxy-deoxybrevianamide E is a specific substrate of the prenyltransferase notC' for normal prenylation at C-7 to produce 6-hydroxy-7-prenyl-deoxybrevianamide, also called notoamide S. As the proposed pivotal branching point in notoamide biosynthesis, notoamide S can be diverted to notoamide E through an oxidative pyran ring closure putatively catalyzed by either notH' cytochrome P450 monooxygenase or the notD' FAD-linked oxidoreductase. This step would be followed by an indole 2,3-epoxidation-initiated pinacol-like rearrangement catalyzed by the notB' FAD-dependent monooxygenase leading to the formation of notoamide C and notoamide D. On the other hand notoamide S is converted to notoamide T by notH' (or notD'), a bifunctional oxidase that also functions as the intramolecular Diels-Alderase responsible for generation of (-)-notoamide T. To generate antipodal (+)-notoaminide T, notH (or notD) in Aspergillus strain MF297-2 is expected to catalyze a Diels-Alder reaction leading to the opposite stereochemistry. The remaining oxidoreductase notD' (or notH') likely catalyzes the oxidative pyran ring formation to yield (-)-stephacidin A. The FAD-dependent monooxygenase notI' is highly similar to notB' and is predicted to catalyze a similar conversion from (-)-stephacidin A to (+)-notoamide B via the 2,3-epoxidation of (-)-stephacidin A followed by a pinacol-type rearrangement. Finally, it remains unclear which enzyme could be responsible for the final hydroxylation steps leading to notoamide A and sclerotiamide. In Aspergillus versicolor, this protein is Cytochrome P450 monooxygenase notH'.